The following is a 113-amino-acid chain: Nucleoid-associated protein Synpcc7942_0464 (113 aa).

Belongs to the YbaB/EbfC family. Homodimer.

It localises to the cytoplasm. The protein localises to the nucleoid. Functionally, binds to DNA and alters its conformation. May be involved in regulation of gene expression, nucleoid organization and DNA protection. This chain is Nucleoid-associated protein Synpcc7942_0464, found in Synechococcus elongatus (strain ATCC 33912 / PCC 7942 / FACHB-805) (Anacystis nidulans R2).